A 388-amino-acid chain; its full sequence is Succinate--CoA ligase [ADP-forming] subunit beta (388 aa).

Residues 9–244 enclose the ATP-grasp domain; the sequence is KELFARRGLP…VTQEDAREAH (236 aa). Residues lysine 46, 53 to 55, glutamate 99, threonine 102, and glutamate 107 each bind ATP; that span reads GRG. Asparagine 199 and aspartate 213 together coordinate Mg(2+). Residues asparagine 264 and 321–323 contribute to the substrate site; that span reads GIV.

Belongs to the succinate/malate CoA ligase beta subunit family. In terms of assembly, heterotetramer of two alpha and two beta subunits. The cofactor is Mg(2+).

The enzyme catalyses succinate + ATP + CoA = succinyl-CoA + ADP + phosphate. It carries out the reaction GTP + succinate + CoA = succinyl-CoA + GDP + phosphate. It participates in carbohydrate metabolism; tricarboxylic acid cycle; succinate from succinyl-CoA (ligase route): step 1/1. In terms of biological role, succinyl-CoA synthetase functions in the citric acid cycle (TCA), coupling the hydrolysis of succinyl-CoA to the synthesis of either ATP or GTP and thus represents the only step of substrate-level phosphorylation in the TCA. The beta subunit provides nucleotide specificity of the enzyme and binds the substrate succinate, while the binding sites for coenzyme A and phosphate are found in the alpha subunit. The polypeptide is Succinate--CoA ligase [ADP-forming] subunit beta (Hamiltonella defensa subsp. Acyrthosiphon pisum (strain 5AT)).